Consider the following 442-residue polypeptide: Putative protein YjbI (442 aa).

The sequence is that of Putative protein YjbI (yjbI) from Escherichia coli (strain K12).